Here is a 185-residue protein sequence, read N- to C-terminus: Large ribosomal subunit protein uL5 (185 aa).

It belongs to the universal ribosomal protein uL5 family. As to quaternary structure, part of the 50S ribosomal subunit; part of the 5S rRNA/L5/L18/L25 subcomplex. Contacts the 5S rRNA and the P site tRNA. Forms a bridge to the 30S subunit in the 70S ribosome.

This is one of the proteins that bind and probably mediate the attachment of the 5S RNA into the large ribosomal subunit, where it forms part of the central protuberance. In the 70S ribosome it contacts protein S13 of the 30S subunit (bridge B1b), connecting the 2 subunits; this bridge is implicated in subunit movement. Contacts the P site tRNA; the 5S rRNA and some of its associated proteins might help stabilize positioning of ribosome-bound tRNAs. This Xanthobacter autotrophicus (strain ATCC BAA-1158 / Py2) protein is Large ribosomal subunit protein uL5.